A 501-amino-acid polypeptide reads, in one-letter code: ADP,ATP carrier protein 3 (501 aa).

12 helical membrane-spanning segments follow: residues 23–43, 59–79, 90–110, 146–166, 183–203, 227–247, 293–313, 326–346, 361–381, 383–403, 446–466, and 470–490; these read LKLF…FGAL, IISL…TVLY, YIFY…AYII, YALM…LMFW, PVLG…LVFF, IMLQ…MLLF, IALL…PWKA, FNFM…FMVI, LLTP…IIFI, EIGA…VGAI, FGKS…PTAT, and IIIY…WNVI.

The protein belongs to the ADP/ATP translocase tlc family.

It is found in the cell membrane. Functionally, provides the rickettsial cell with host ATP in exchange for rickettsial ADP. This is an obligate exchange system. This energy acquiring activity is an important component of rickettsial parasitism. The chain is ADP,ATP carrier protein 3 (tlcC) from Rickettsia felis (strain ATCC VR-1525 / URRWXCal2) (Rickettsia azadi).